The primary structure comprises 859 residues: Low-density lipoprotein receptor-related protein 12 (859 aa).

A signal peptide spans 1-32; it reads MACRWSTKESPRWRSALLLLFLAGVYGNGALA. At 33-492 the chain is on the extracellular side; that stretch reads EHSENVHISG…ENCPVIVPTR (460 aa). Intrachain disulfides connect Cys-47–Cys-76 and Cys-103–Cys-122. Residues 47–159 form the CUB 1 domain; that stretch reads CGETPEQIRA…KGFRLAYFSG (113 aa). Residue Asn-75 is glycosylated (N-linked (GlcNAc...) asparagine). A glycan (N-linked (GlcNAc...) asparagine) is linked at Asn-146. 2 consecutive LDL-receptor class A domains span residues 165 to 201 and 214 to 255; these read NCAC…EICA and PCAY…IDCD. Intrachain disulfides connect Cys-166–Cys-178, Cys-173–Cys-191, Cys-185–Cys-200, Cys-215–Cys-232, Cys-222–Cys-245, Cys-239–Cys-254, and Cys-259–Cys-285. The CUB 2 domain occupies 259–372; sequence CGQWLKYFYG…RGFNATYQVD (114 aa). Residues Asn-284 and Asn-366 are each glycosylated (N-linked (GlcNAc...) asparagine). 3 LDL-receptor class A domains span residues 374 to 411, 412 to 449, and 450 to 486; these read FCLP…TNCT, MCQK…KNCF, and FCQP…ENCP. Intrachain disulfides connect Cys-375/Cys-388, Cys-382/Cys-401, Cys-395/Cys-410, Cys-413/Cys-426, Cys-420/Cys-439, Cys-433/Cys-448, Cys-451/Cys-463, Cys-458/Cys-476, and Cys-470/Cys-485. N-linked (GlcNAc...) asparagine glycosylation occurs at Asn-409. An N-linked (GlcNAc...) asparagine glycan is attached at Asn-441. A helical transmembrane segment spans residues 493-513; sequence VITAAVIGSLICGLLLVIALG. Over 514-859 the chain is Cytoplasmic; it reads CTCKLYSLRM…TSDDEALLLC (346 aa). 4 disordered regions span residues 623-678, 693-723, 748-770, and 801-823; these read ADGD…LPQK, ASSS…SPAR, SSLS…REDD, and DQGQ…SNRD. 2 stretches are compositionally biased toward polar residues: residues 748-757 and 801-814; these read SSLSQNQSPL and DQGQ…NATN.

It belongs to the LDLR family. As to quaternary structure, may interact with RACK1, ZFYVE9 and NMRK2. In terms of tissue distribution, widely expressed in heart, skeletal muscle, brain, lung, placenta and pancreas, but not in tissues consisting of a large number of epithelial cells, such as liver and kidney. Expressed at very low levels in a number of tumor-derived cell lines.

It is found in the membrane. Its subcellular location is the coated pit. Functionally, probable receptor, which may be involved in the internalization of lipophilic molecules and/or signal transduction. May act as a tumor suppressor. The sequence is that of Low-density lipoprotein receptor-related protein 12 (LRP12) from Homo sapiens (Human).